The primary structure comprises 108 residues: uncharacterized protein (108 aa).

The chain crosses the membrane as a helical span at residues 7-27; that stretch reads FIPMLLVANAAPYFFYPIFML.

This sequence to N.crassa NCU05373.1.

The protein localises to the membrane. This is an uncharacterized protein from Schizosaccharomyces pombe (strain 972 / ATCC 24843) (Fission yeast).